The sequence spans 368 residues: Biotin synthase (368 aa).

A Radical SAM core domain is found at 46-277; it reads VHGDEVALCG…AAHIFVMGGR (232 aa). C64, C68, and C71 together coordinate [4Fe-4S] cluster. S109, C142, and C202 together coordinate [2Fe-2S] cluster. The segment at 347 to 368 is disordered; that stretch reads RAAEPGGKRGLPVVGPPRGGCA.

This sequence belongs to the radical SAM superfamily. Biotin synthase family. As to quaternary structure, homodimer. [4Fe-4S] cluster is required as a cofactor. [2Fe-2S] cluster serves as cofactor.

It carries out the reaction (4R,5S)-dethiobiotin + (sulfur carrier)-SH + 2 reduced [2Fe-2S]-[ferredoxin] + 2 S-adenosyl-L-methionine = (sulfur carrier)-H + biotin + 2 5'-deoxyadenosine + 2 L-methionine + 2 oxidized [2Fe-2S]-[ferredoxin]. It participates in cofactor biosynthesis; biotin biosynthesis; biotin from 7,8-diaminononanoate: step 2/2. Catalyzes the conversion of dethiobiotin (DTB) to biotin by the insertion of a sulfur atom into dethiobiotin via a radical-based mechanism. The protein is Biotin synthase of Anaeromyxobacter sp. (strain Fw109-5).